The primary structure comprises 170 residues: Single-stranded DNA-binding protein (170 aa).

The segment at 1–26 (MSNELKQVEQTEEAVVVSETKDYIKV) is oligomerization.

The protein belongs to the phi29likevirus single-strand-binding protein family. Hexamer.

Functionally, single-stranded DNA-binding protein required for the elongation during viral DNA replication by strand displacement. Displaced viral DNA strands are transiently coated with the ssDNA-binding protein and therefore protected againt nucleases. The latter is then probably removed by the replisome that performs lagging strand synthesis or during the events that lead up to the recombination process. Has helix-destabilizing activity since it removes secondary structure from the ssDNA in replicative intermediates. This Bacillus subtilis (Bacteriophage GA-1) protein is Single-stranded DNA-binding protein.